The following is a 436-amino-acid chain: GTPase Der (436 aa).

EngA-type G domains follow at residues 4–167 and 175–351; these read PIVA…PDEA and IRFS…DNHR. Residues 10-17, 57-61, 119-122, 181-188, 229-233, and 294-297 each bind GTP; these read GRPNVGKS, DTGGI, NKVD, DTAGM, and NKWD. A KH-like domain is found at 352–436; sequence KRITSSTLND…PIKLIVRARK (85 aa).

This sequence belongs to the TRAFAC class TrmE-Era-EngA-EngB-Septin-like GTPase superfamily. EngA (Der) GTPase family. Associates with the 50S ribosomal subunit.

GTPase that plays an essential role in the late steps of ribosome biogenesis. This is GTPase Der from Leuconostoc mesenteroides subsp. mesenteroides (strain ATCC 8293 / DSM 20343 / BCRC 11652 / CCM 1803 / JCM 6124 / NCDO 523 / NBRC 100496 / NCIMB 8023 / NCTC 12954 / NRRL B-1118 / 37Y).